The following is an 871-amino-acid chain: MGITSVLTKDNVKKIDTDIDVQERDLNVFITSASRVIAPLWPISTFAARNPWMGLENQPFDQVASWLKNTRDVDIYPSASMIRSAKNKGEIDEDFVEMGLQRWLDSHSYHIPRDVAERFCHAALKLDPLPSDLLSSHELEKLVSECSGLDHIENVFMQPLSSYIENQDGERLVNILDHHVIKWSKLYLDDSQAGWTMPNREEGFYRAWQHLIQYDPALSKKQRERVKGWPKEAHLALQEALFALEIPESEIQTYLEGHLLSLPGWAGMMLWRSQQSSHEHALLTEYLAVRISMEWALIKPYLPLTNERSKKTISIAPLIAAWIHWGGLTLEEWSQMTASEQNEYLSFAYSFDEKLRKKLWLEAWEQTYTDRLSQKIISKQRETGREKSALAQLAFCIDVRSEPFRRQLEKEGPFETIGIAGFFGVPIATCELGSKHSHASLPIIQKPQNKIKEFADEDVFKKYNQRKQAIHSLSHTFKTMKQNALSSLLLPELSGPWLTLQMAARSFVPRKAGRFIRNLREAWLRKPDTKLSLHHDATEAEIPVGFTDEEKVNYARQALKMMGLTENIAPLVVICGHGSQSTNNPYSAALDCGACGGAAGGFNARVLAALCNLSEVREALLAEGIKIPEDTVFAAAEHNTTVDELHWLYVPELSEAAQEAFEQIEAVMPKVRHHVNAERLAQLPNFQSKLKNPKAEANRFAEDWSEIRPEWGLARNAAFIIGKRELTQDCDLEGRAFLHNYDWKQDESGELLANIIVGPGTVAQWINLQYYASTVAPHYYGSGNKATQTVTAGLGVMQGNASDLLAGLPWQSVMESDHEAYHSPLRLLILIQAPREYVERLLNHDSAFLQKVQNGWVRLASLDPEGCWESW.

The Zn(2+) site is built by cysteine 396, aspartate 398, histidine 577, and cysteine 592.

This sequence belongs to the inorganic carbon transporter (TC 9.A.2) DabA family. As to quaternary structure, forms a complex with DabB. It depends on Zn(2+) as a cofactor.

Its subcellular location is the cell membrane. Part of an energy-coupled inorganic carbon pump. The chain is Probable inorganic carbon transporter subunit DabA from Bacillus subtilis (strain 168).